A 348-amino-acid polypeptide reads, in one-letter code: Methylthioribose-1-phosphate isomerase (348 aa).

Substrate contacts are provided by residues 48 to 50 (RGA), Arg-90, and Gln-195. The active-site Proton donor is the Asp-236. Position 246–247 (246–247 (NK)) interacts with substrate.

The protein belongs to the eIF-2B alpha/beta/delta subunits family. MtnA subfamily.

The catalysed reaction is 5-(methylsulfanyl)-alpha-D-ribose 1-phosphate = 5-(methylsulfanyl)-D-ribulose 1-phosphate. Its pathway is amino-acid biosynthesis; L-methionine biosynthesis via salvage pathway; L-methionine from S-methyl-5-thio-alpha-D-ribose 1-phosphate: step 1/6. Catalyzes the interconversion of methylthioribose-1-phosphate (MTR-1-P) into methylthioribulose-1-phosphate (MTRu-1-P). This chain is Methylthioribose-1-phosphate isomerase, found in Exiguobacterium sibiricum (strain DSM 17290 / CCUG 55495 / CIP 109462 / JCM 13490 / 255-15).